A 521-amino-acid polypeptide reads, in one-letter code: Cytokinin dehydrogenase 9 (521 aa).

A signal peptide spans 1–22; sequence MRPSLLQYLKLLLLLALGGVTT. An N-linked (GlcNAc...) asparagine glycan is attached at Asn57. The FAD-binding PCMH-type domain maps to 59 to 237; it reads SSFPPVAVLH…TRARIPLEPA (179 aa). The FAD site is built by Ala95, Gly97, and Gly99. Pros-8alpha-FAD histidine is present on His100. FAD is bound by residues Ser101, Gln105, Asp161, Thr166, Ser172, Val176, and Ile227. Asn278, Asn412, and Asn418 each carry an N-linked (GlcNAc...) asparagine glycan. Residue Tyr469 coordinates FAD. A glycan (N-linked (GlcNAc...) asparagine) is linked at Asn472. Residue Gln507 participates in FAD binding.

This sequence belongs to the oxygen-dependent FAD-linked oxidoreductase family. As to quaternary structure, monomer. The cofactor is FAD. Expressed in inflorescence meristems.

Its subcellular location is the secreted. The protein resides in the extracellular space. The protein localises to the cytoplasm. It localises to the cytosol. It is found in the nucleus. The catalysed reaction is N(6)-dimethylallyladenine + A + H2O = 3-methyl-2-butenal + adenine + AH2. In terms of biological role, catalyzes the oxidation of cytokinins, a family of N(6)-substituted adenine derivatives that are plant hormones, where the substituent is an isopentenyl group. Possesses cytokinin oxidase activity toward trans-zeatin (tZ) and N6-(2-isopentenyl)adenine (2iP) in vitro. Functions as a primary strigolactone-responsive gene to regulate rice tillering, plant height, and panicle size, likely via a secondary response gene, RR5, which encodes a cytokinin-inducible rice type-A response regulator that seems to act as negative regulator of the cytokinin signaling. The chain is Cytokinin dehydrogenase 9 from Oryza sativa subsp. japonica (Rice).